The following is a 234-amino-acid chain: Proteasome subunit alpha type-2 (234 aa).

Belongs to the peptidase T1A family. In terms of assembly, the 26S proteasome consists of a 20S proteasome core and two 19S regulatory subunits. The 20S proteasome core is composed of 28 subunits that are arranged in four stacked rings, resulting in a barrel-shaped structure. The two end rings are each formed by seven alpha subunits, and the two central rings are each formed by seven beta subunits. The catalytic chamber with the active sites is on the inside of the barrel. Interacts with Rpn6.

The protein localises to the cytoplasm. It is found in the nucleus. In terms of biological role, the proteasome is a multicatalytic proteinase complex which is characterized by its ability to cleave peptides with Arg, Phe, Tyr, Leu, and Glu adjacent to the leaving group at neutral or slightly basic pH. The proteasome has an ATP-dependent proteolytic activity. This is Proteasome subunit alpha type-2 (Prosalpha2) from Drosophila melanogaster (Fruit fly).